Reading from the N-terminus, the 136-residue chain is Histone H3, embryonic (136 aa).

The segment at methionine 1 to arginine 43 is disordered. Lysine 5 is modified (N6-methylated lysine). Lysine 10 carries the post-translational modification N6-acetyllysine; alternate. Lysine 10 carries the post-translational modification N6-methylated lysine; alternate. Serine 11 carries the phosphoserine modification. 2 positions are modified to N6-acetyllysine: lysine 15 and lysine 24. An N6-methylated lysine mark is found at lysine 28, lysine 37, and lysine 80.

The protein belongs to the histone H3 family. The nucleosome is a histone octamer containing two molecules each of H2A, H2B, H3 and H4 assembled in one H3-H4 heterotetramer and two H2A-H2B heterodimers. The octamer wraps approximately 147 bp of DNA. Post-translationally, acetylation is generally linked to gene activation. In terms of processing, methylation at Lys-5 is linked to gene activation. Methylation at Lys-10 is linked to gene repression.

The protein localises to the nucleus. Its subcellular location is the chromosome. Functionally, core component of nucleosome. Nucleosomes wrap and compact DNA into chromatin, limiting DNA accessibility to the cellular machineries which require DNA as a template. Histones thereby play a central role in transcription regulation, DNA repair, DNA replication and chromosomal stability. DNA accessibility is regulated via a complex set of post-translational modifications of histones, also called histone code, and nucleosome remodeling. The chain is Histone H3, embryonic from Strongylocentrotus purpuratus (Purple sea urchin).